Consider the following 876-residue polypeptide: Alanine--tRNA ligase (876 aa).

Positions 562, 566, 666, and 670 each coordinate Zn(2+).

It belongs to the class-II aminoacyl-tRNA synthetase family. Zn(2+) is required as a cofactor.

It is found in the cytoplasm. It carries out the reaction tRNA(Ala) + L-alanine + ATP = L-alanyl-tRNA(Ala) + AMP + diphosphate. Functionally, catalyzes the attachment of alanine to tRNA(Ala) in a two-step reaction: alanine is first activated by ATP to form Ala-AMP and then transferred to the acceptor end of tRNA(Ala). Also edits incorrectly charged Ser-tRNA(Ala) and Gly-tRNA(Ala) via its editing domain. This Marinobacter nauticus (strain ATCC 700491 / DSM 11845 / VT8) (Marinobacter aquaeolei) protein is Alanine--tRNA ligase.